An 862-amino-acid polypeptide reads, in one-letter code: Leucine--tRNA ligase (862 aa).

A 'HIGH' region motif is present at residues 49–59; it reads PYPSGRIHMGH. The short motif at 625-629 is the 'KMSKS' region element; it reads KMSKS. An ATP-binding site is contributed by Lys-628.

This sequence belongs to the class-I aminoacyl-tRNA synthetase family.

The protein localises to the cytoplasm. The enzyme catalyses tRNA(Leu) + L-leucine + ATP = L-leucyl-tRNA(Leu) + AMP + diphosphate. The chain is Leucine--tRNA ligase from Paramagnetospirillum magneticum (strain ATCC 700264 / AMB-1) (Magnetospirillum magneticum).